A 586-amino-acid polypeptide reads, in one-letter code: Arginine--tRNA ligase (586 aa).

A 'HIGH' region motif is present at residues 133–143 (ANPTGPLNIVS).

The protein belongs to the class-I aminoacyl-tRNA synthetase family. As to quaternary structure, monomer.

It is found in the cytoplasm. It catalyses the reaction tRNA(Arg) + L-arginine + ATP = L-arginyl-tRNA(Arg) + AMP + diphosphate. The polypeptide is Arginine--tRNA ligase (Leptospira interrogans serogroup Icterohaemorrhagiae serovar Lai (strain 56601)).